Here is a 113-residue protein sequence, read N- to C-terminus: uncharacterized protein (113 aa).

A run of 2 helical transmembrane segments spans residues 1–21 and 48–68; these read MLIAGTLCVCAAVISAVFGTW and IMLAAGGVVALVAVAHTALIV.

This sequence to M.tuberculosis Rv0039.

It is found in the cell membrane. This is an uncharacterized protein from Mycobacterium leprae (strain TN).